Reading from the N-terminus, the 106-residue chain is Cell division protein FtsB (106 aa).

The Cytoplasmic segment spans residues 1-3; that stretch reads MGK. The chain crosses the membrane as a helical span at residues 4–21; the sequence is LTLLLLVLLGWLQYSLWL. The Periplasmic portion of the chain corresponds to 22–106; sequence GKNGIHDYVR…SRPSTPNNTQ (85 aa). A coiled-coil region spans residues 29-70; the sequence is YVRVKNDVAMQERNNSKLKARNDQLSAEIDDLTGGQEAIEER.

This sequence belongs to the FtsB family. As to quaternary structure, part of a complex composed of FtsB, FtsL and FtsQ.

The protein resides in the cell inner membrane. Essential cell division protein. May link together the upstream cell division proteins, which are predominantly cytoplasmic, with the downstream cell division proteins, which are predominantly periplasmic. This is Cell division protein FtsB from Photorhabdus laumondii subsp. laumondii (strain DSM 15139 / CIP 105565 / TT01) (Photorhabdus luminescens subsp. laumondii).